A 158-amino-acid polypeptide reads, in one-letter code: Large ribosomal subunit protein uL11 (158 aa).

The protein belongs to the universal ribosomal protein uL11 family. Part of the ribosomal stalk of the 50S ribosomal subunit. Interacts with L10 and the large rRNA to form the base of the stalk. L10 forms an elongated spine to which L12 dimers bind in a sequential fashion forming a multimeric L10(L12)X complex.

In terms of biological role, forms part of the ribosomal stalk which helps the ribosome interact with GTP-bound translation factors. The protein is Large ribosomal subunit protein uL11 of Methanoculleus marisnigri (strain ATCC 35101 / DSM 1498 / JR1).